We begin with the raw amino-acid sequence, 442 residues long: Serine protease AprX (442 aa).

The Peptidase S8 domain maps to 122 to 439; the sequence is KALLDTATEA…AGAVNAENSV (318 aa). Residues aspartate 155 and histidine 187 each act as charge relay system in the active site. The disordered stretch occupies residues 318–337; the sequence is DNNTASSDDDTVASFSSRGP. Serine 384 acts as the Charge relay system in catalysis. The disordered stretch occupies residues 423–442; the sequence is EDPNIYGAGAVNAENSVPGQ.

Belongs to the peptidase S8 family.

The protein localises to the cytoplasm. With respect to regulation, is completely inhibited by phenylmethanesulphonylfluoride (PMSF) in vitro. Displays serine protease activity. Seems to have a broad substrate specificity. In Bacillus subtilis (strain 168), this protein is Serine protease AprX (aprX).